Here is a 348-residue protein sequence, read N- to C-terminus: Putative methylesterase 14, chloroplastic (348 aa).

Disordered regions lie at residues 1–29 (MGNK…MNRS) and 60–80 (GSMS…SDPF). Residues 1–76 (MGNKIISMMK…GSTSTRKRTL (76 aa)) constitute a chloroplast transit peptide. Ser77 bears the Phosphoserine mark. Ser172 serves as the catalytic Acyl-ester intermediate. Catalysis depends on charge relay system residues Asp299 and His327.

Belongs to the AB hydrolase superfamily. Methylesterase family.

The protein localises to the plastid. It is found in the chloroplast. Its function is as follows. Putative methylesterase. This is Putative methylesterase 14, chloroplastic from Arabidopsis thaliana (Mouse-ear cress).